A 194-amino-acid chain; its full sequence is Molybdenum cofactor guanylyltransferase (194 aa).

Residues 12–14 (LAG), Lys25, Asn53, Asp70, and Asp100 contribute to the GTP site. Asp100 contributes to the Mg(2+) binding site.

The protein belongs to the MobA family. As to quaternary structure, monomer. Mg(2+) serves as cofactor.

It is found in the cytoplasm. It carries out the reaction Mo-molybdopterin + GTP + H(+) = Mo-molybdopterin guanine dinucleotide + diphosphate. Transfers a GMP moiety from GTP to Mo-molybdopterin (Mo-MPT) cofactor (Moco or molybdenum cofactor) to form Mo-molybdopterin guanine dinucleotide (Mo-MGD) cofactor. In Vibrio atlanticus (strain LGP32) (Vibrio splendidus (strain Mel32)), this protein is Molybdenum cofactor guanylyltransferase.